Here is a 303-residue protein sequence, read N- to C-terminus: Protein SULFUR DEFICIENCY-INDUCED 2 (303 aa).

A coiled-coil region spans residues 62–89 (RVDSALKDMALLMKQQNRAEEAIDAIQS). TPR repeat units lie at residues 64 to 97 (DSAL…CSRQ), 100 to 133 (ESLD…IYQG), 160 to 193 (SRIL…EPDA), and 195 to 226 (KACN…ENKE). A coiled-coil region spans residues 232-253 (RLMARVQELLSELKPQEEEAAA).

It belongs to the MS5 protein family.

It is found in the nucleus. Its function is as follows. Involved in the utilization of stored sulfate under sulfur-deficient conditions. The sequence is that of Protein SULFUR DEFICIENCY-INDUCED 2 from Arabidopsis thaliana (Mouse-ear cress).